The chain runs to 348 residues: Eukaryotic translation initiation factor 3 subunit H (348 aa).

The tract at residues 1 to 25 is disordered; the sequence is MASRKEGSGAAGGGFGASKGKGKAA. Gly residues predominate over residues 9-19; that stretch reads GAAGGGFGASK. An MPN domain is found at 35 to 169; that stretch reads VQIDGLVVLK…LKAYRLTPKL (135 aa). Over residues 266–285 the composition is skewed to low complexity; sequence QQQQKHQYQQRRQQENLQRQ. Residues 266-304 form a disordered region; it reads QQQQKHQYQQRRQQENLQRQSRGEAPLPEEDINKLFKPP.

This sequence belongs to the eIF-3 subunit H family. As to quaternary structure, component of the eukaryotic translation initiation factor 3 (eIF-3) complex, which is composed of 13 subunits: EIF3A, EIF3B, EIF3C, EIF3D, EIF3E, EIF3F, EIF3G, EIF3H, EIF3I, EIF3J, EIF3K, EIF3L and EIF3M.

The protein resides in the cytoplasm. Component of the eukaryotic translation initiation factor 3 (eIF-3) complex, which is involved in protein synthesis of a specialized repertoire of mRNAs and, together with other initiation factors, stimulates binding of mRNA and methionyl-tRNAi to the 40S ribosome. The eIF-3 complex specifically targets and initiates translation of a subset of mRNAs involved in cell proliferation. This is Eukaryotic translation initiation factor 3 subunit H from Gallus gallus (Chicken).